The sequence spans 62 residues: Small, acid-soluble spore protein A (62 aa).

This sequence belongs to the alpha/beta-type SASP family.

Functionally, SASP are bound to spore DNA. They are double-stranded DNA-binding proteins that cause DNA to change to an a-like conformation. They protect the DNA backbone from chemical and enzymatic cleavage and are thus involved in dormant spore's high resistance to UV light. The polypeptide is Small, acid-soluble spore protein A (sasP-A) (Priestia megaterium (Bacillus megaterium)).